The primary structure comprises 480 residues: tRNA (guanine(37)-N(1))-methyltransferase (480 aa).

S-adenosyl-L-methionine is bound by residues histidine 244, 292–293 (DL), 321–322 (DG), and asparagine 342.

This sequence belongs to the class I-like SAM-binding methyltransferase superfamily. TRM5/TYW2 family. As to quaternary structure, monomer.

The protein localises to the mitochondrion matrix. Its subcellular location is the nucleus. It localises to the cytoplasm. The catalysed reaction is guanosine(37) in tRNA + S-adenosyl-L-methionine = N(1)-methylguanosine(37) in tRNA + S-adenosyl-L-homocysteine + H(+). Its function is as follows. Specifically methylates the N1 position of guanosine-37 in various cytoplasmic and mitochondrial tRNAs. Methylation is not dependent on the nature of the nucleoside 5' of the target nucleoside. This is the first step in the biosynthesis of wybutosine (yW), a modified base adjacent to the anticodon of tRNAs and required for accurate decoding. The polypeptide is tRNA (guanine(37)-N(1))-methyltransferase (Thalassiosira pseudonana (Marine diatom)).